A 464-amino-acid chain; its full sequence is CRISPR system endoribonuclease Csm6 (464 aa).

Residues 1–190 form a CARF domain region; that stretch reads MEDLDALWER…LRILPNPHEA (190 aa). The interval 191 to 464 is HEPN domain; that stretch reads LAEVDALFAK…LSPEPVPLGF (274 aa).

This sequence belongs to the CRISPR-associated Csm6 family. Homodimer. The protein forms a twisted, head-to-head dimer; the composite ssRNase active site is formed at the dimer interface. It depends on Does not require a metal cofactor. as a cofactor.

Non-specific ssRNase activity is allosterically activated about 1000-fold by cyclic tetraadenylate (cA4), which probably binds to its CARF domain. Its function is as follows. CRISPR (clustered regularly interspaced short palindromic repeat) is an adaptive immune system that provides protection against mobile genetic elements (viruses, transposable elements and conjugative plasmids). CRISPR clusters contain spacers, sequences complementary to antecedent mobile elements, and target invading nucleic acids. CRISPR clusters are transcribed and processed into CRISPR RNA (crRNA). The type III-A Csm effector complex binds crRNA and acts as a crRNA-guided RNase, DNase and cyclic oligoadenylate synthase; binding of target RNA cognate to the crRNA is required for all activities. This protein is not part of the Csm effector complex. In terms of biological role, a single-strand-specific endoribonuclease (ssRNase) producing free 5'-OH. Activity is approximately 1000-fold stimulated by cyclic oligoadenylate (cOA); only cyclic tetraadenylate (cA4) stimulates the ssRNase activity while linear oligoadenylates do not activate the RNase. Another study showed stimulation by linear tetraadenylate at very high concentrations, but did not examine stimulation by cA4. The protein is CRISPR system endoribonuclease Csm6 of Thermus thermophilus (strain ATCC 27634 / DSM 579 / HB8).